The sequence spans 155 residues: Archaemetzincin (155 aa).

Histidine 109 is a binding site for Zn(2+). The active-site Proton acceptor is the glutamate 110. Zn(2+)-binding residues include histidine 113, histidine 119, cysteine 120, cysteine 125, cysteine 144, and cysteine 147.

It belongs to the peptidase M54 family. As to quaternary structure, monomer. Zn(2+) serves as cofactor.

In terms of biological role, probable zinc metalloprotease whose natural substrate is unknown. In Pyrobaculum aerophilum (strain ATCC 51768 / DSM 7523 / JCM 9630 / CIP 104966 / NBRC 100827 / IM2), this protein is Archaemetzincin.